A 66-amino-acid polypeptide reads, in one-letter code: Large ribosomal subunit protein bL35 (66 aa).

This sequence belongs to the bacterial ribosomal protein bL35 family.

The protein is Large ribosomal subunit protein bL35 of Methylobacterium nodulans (strain LMG 21967 / CNCM I-2342 / ORS 2060).